Reading from the N-terminus, the 211-residue chain is MANCIVRDWQGKEAGKASLDLKVAKEASALDLMHRAVLRQQAHSRQGTASTLTRSEVRGGGRKPYKQKGTGRARQGSVRTPLRPGGGIIFGPKPRSYNLAMNRKERRSALRTALMARIEDLVVVKDFATTLTTPKTKEIIDALGRLDVSATSKVLIILTNPSEAVRRSIRNLETVKLIAADQLNVFDLLHANKLVVGEDALAKIQEVYGDD.

The segment at 40-85 (QQAHSRQGTASTLTRSEVRGGGRKPYKQKGTGRARQGSVRTPLRPG) is disordered. A compositionally biased stretch (polar residues) spans 41-54 (QAHSRQGTASTLTR). The span at 60–71 (GGRKPYKQKGTG) shows a compositional bias: basic residues.

It belongs to the universal ribosomal protein uL4 family. As to quaternary structure, part of the 50S ribosomal subunit.

In terms of biological role, one of the primary rRNA binding proteins, this protein initially binds near the 5'-end of the 23S rRNA. It is important during the early stages of 50S assembly. It makes multiple contacts with different domains of the 23S rRNA in the assembled 50S subunit and ribosome. Forms part of the polypeptide exit tunnel. This chain is Large ribosomal subunit protein uL4, found in Synechococcus sp. (strain CC9311).